The following is a 63-amino-acid chain: Defensin-like protein 278 (63 aa).

A signal peptide spans 1-15 (MSLVYMYMYIGVVMS). 3 cysteine pairs are disulfide-bonded: Cys-31-Cys-48, Cys-37-Cys-53, and Cys-41-Cys-55.

This sequence belongs to the DEFL family.

Its subcellular location is the secreted. This chain is Defensin-like protein 278, found in Arabidopsis thaliana (Mouse-ear cress).